Here is a 619-residue protein sequence, read N- to C-terminus: 1-deoxy-D-xylulose-5-phosphate synthase (619 aa).

Thiamine diphosphate contacts are provided by residues histidine 74 and 115–117 (GHS). Aspartate 146 contacts Mg(2+). Residues 147 to 148 (GA), asparagine 175, tyrosine 285, and glutamate 365 each bind thiamine diphosphate. Asparagine 175 serves as a coordination point for Mg(2+).

It belongs to the transketolase family. DXPS subfamily. Homodimer. Requires Mg(2+) as cofactor. It depends on thiamine diphosphate as a cofactor.

The catalysed reaction is D-glyceraldehyde 3-phosphate + pyruvate + H(+) = 1-deoxy-D-xylulose 5-phosphate + CO2. The protein operates within metabolic intermediate biosynthesis; 1-deoxy-D-xylulose 5-phosphate biosynthesis; 1-deoxy-D-xylulose 5-phosphate from D-glyceraldehyde 3-phosphate and pyruvate: step 1/1. Functionally, catalyzes the acyloin condensation reaction between C atoms 2 and 3 of pyruvate and glyceraldehyde 3-phosphate to yield 1-deoxy-D-xylulose-5-phosphate (DXP). In Clostridium perfringens (strain 13 / Type A), this protein is 1-deoxy-D-xylulose-5-phosphate synthase.